A 461-amino-acid polypeptide reads, in one-letter code: Argininosuccinate lyase (461 aa).

It belongs to the lyase 1 family. Argininosuccinate lyase subfamily.

The protein localises to the cytoplasm. It carries out the reaction 2-(N(omega)-L-arginino)succinate = fumarate + L-arginine. It functions in the pathway amino-acid biosynthesis; L-arginine biosynthesis; L-arginine from L-ornithine and carbamoyl phosphate: step 3/3. The chain is Argininosuccinate lyase from Shewanella piezotolerans (strain WP3 / JCM 13877).